The primary structure comprises 104 residues: MAGKVHRLSGEEREQLLPNLRAVGWHELDGRDAICKEFHFKDFNRAFGFMTRVALQAEKLDHHPEWFNVYDKVHITLSTHDCGGLSERDINLASFIEQIAASLS.

Alanine 2 carries the N-acetylalanine modification. Residues 61-63 (DHH) and 78-81 (STHD) each bind substrate.

This sequence belongs to the pterin-4-alpha-carbinolamine dehydratase family. As to quaternary structure, homotetramer and homodimer.

The protein resides in the cytoplasm. It is found in the nucleus. It carries out the reaction (4aS,6R)-4a-hydroxy-L-erythro-5,6,7,8-tetrahydrobiopterin = (6R)-L-erythro-6,7-dihydrobiopterin + H2O. Its function is as follows. Involved in tetrahydrobiopterin biosynthesis. Seems to both prevent the formation of 7-pterins and accelerate the formation of quinonoid-BH2. Coactivator for HNF1A-dependent transcription. Regulates the dimerization of homeodomain protein HNF1A and enhances its transcriptional activity. Also acts as a coactivator for HNF1B-dependent transcription. This chain is Pterin-4-alpha-carbinolamine dehydratase (pcbd), found in Xenopus laevis (African clawed frog).